A 438-amino-acid polypeptide reads, in one-letter code: Trigger factor (438 aa).

Positions Asp160–Pro245 constitute a PPIase FKBP-type domain.

It belongs to the FKBP-type PPIase family. Tig subfamily.

It is found in the cytoplasm. The enzyme catalyses [protein]-peptidylproline (omega=180) = [protein]-peptidylproline (omega=0). Involved in protein export. Acts as a chaperone by maintaining the newly synthesized protein in an open conformation. Functions as a peptidyl-prolyl cis-trans isomerase. This chain is Trigger factor, found in Francisella tularensis subsp. holarctica (strain LVS).